The following is a 2565-amino-acid chain: Transformation/transcription domain-associated protein (2565 aa).

Phosphoserine occurs at positions 328, 749, and 775. Residues 710–1087 (SEVVIKWELQ…SPMAANQTPT (378 aa)) form an interaction with TP53 region. The Bipartite nuclear localization signal signature appears at 745–760 (KRGLSVDSAQEVKRFR). Lys-1242 is covalently cross-linked (Glycyl lysine isopeptide (Lys-Gly) (interchain with G-Cter in SUMO2)). Residues 1242–1253 (KQEPRERENSES) show a composition bias toward basic and acidic residues. Residues 1242 to 1277 (KQEPRERENSESKEEDVEIDIELAPGDQTSTPKTKE) form a disordered region. The FAT domain occupies 1391 to 1963 (VLKYLGKTHN…YFPIRTLYLT (573 aa)). At Lys-1766 the chain carries N6-acetyllysine. A disordered region spans residues 1973-1995 (KSDSGQQQPSSAGNQSHSASDPG). Positions 1975–1991 (DSGQQQPSSAGNQSHSA) are enriched in polar residues. Residues 2206–2529 (MPRVEIVQKH…AVTAIMTRLH (324 aa)) enclose the PI3K/PI4K catalytic domain. The G-loop stretch occupies residues 2212-2218 (VQKHNTA). A catalytic loop region spans residues 2393–2401 (HLNRLNPEM). Residues 2413–2438 (VAYFRFDINDATGDLDANRPVPFRLT) are activation loop. The 33-residue stretch at 2533–2565 (QFDGGESKVNTLVAAANSLDNLCRMDPAWHPWL) folds into the FATC domain.

It belongs to the PI3/PI4-kinase family. TRA1 subfamily. As to quaternary structure, interacts with MYC, E2F1 and E2F4 transcription factors. Interacts directly with p53/TP53. Interacts with GCN5L2. Component of various HAT complexes. Component of the PCAF complex, at least composed of TADA2L/ADA2, SUPT3H, TADA3L/ADA3, TAF5L/PAF65-beta, TAF6L/PAF65-alpha, TAF10/TAFII30, TAF12/TAFII20, TAF9/TAFII31 and TRRAP. Component of the TFTC-HAT complex, at least composed of TAF5L, TAF6L, TADA3L, SUPT3H/SPT3, TAF2/TAFII150, TAF4/TAFII135, TAF5/TAFII100, GCN5L2/GCN5, TAF10 and TRRAP. Component of the NuA4 histone acetyltransferase complex which contains the catalytic subunit KAT5/TIP60 and the subunits EP400, TRRAP/PAF400, BRD8/SMAP, EPC1, DMAP1/DNMAP1, RUVBL1/TIP49, RUVBL2, ING3, actin, ACTL6A/BAF53A, MORF4L1/MRG15, MORF4L2/MRGX, MRGBP, YEATS4/GAS41, VPS72/YL1 and MEAF6. Component of the STAGA complex, at least composed of SUPT3H, GCN5L2, SUPT7L, TAF5L, TAF6L, TADA3L, TAD1L, TAF10, TAF12, TRRAP and TAF9. The STAGA core complex is associated with a subcomplex required for histone deubiquitination composed of ATXN7L3, ENY2 and USP22. Component of the BAF53 complex, at least composed of BAF53A, RUVBL1, SMARCA4/BRG1, and TRRAP, which preferentially acetylates histone H4 (and H2A) within nucleosomes. Interacts with NPAT. Interaction with TELO2 and TTI1. Component of a SWR1-like complex. In terms of tissue distribution, expressed in the cochlea.

Its subcellular location is the nucleus. Its function is as follows. Adapter protein, which is found in various multiprotein chromatin complexes with histone acetyltransferase activity (HAT), which gives a specific tag for epigenetic transcription activation. Component of the NuA4 histone acetyltransferase complex which is responsible for acetylation of nucleosomal histones H4 and H2A. Plays a central role in MYC transcription activation, and also participates in cell transformation by MYC. Required for p53/TP53-, E2F1- and E2F4-mediated transcription activation. Probably acts by linking transcription factors such as E1A, MYC or E2F1 to HAT complexes such as STAGA thereby allowing transcription activation. Probably not required in the steps following histone acetylation in processes of transcription activation. May be required for the mitotic checkpoint and normal cell cycle progression. Component of a SWR1-like complex that specifically mediates the removal of histone H2A.Z/H2AZ1 from the nucleosome. May play a role in the formation and maintenance of the auditory system. The polypeptide is Transformation/transcription domain-associated protein (Trrap) (Mus musculus (Mouse)).